Consider the following 172-residue polypeptide: Putative acetyltransferase YvoF (172 aa).

This sequence belongs to the transferase hexapeptide repeat family.

In Bacillus subtilis (strain 168), this protein is Putative acetyltransferase YvoF (yvoF).